The sequence spans 750 residues: Photosystem I P700 chlorophyll a apoprotein A1 (750 aa).

8 helical membrane passes run 70–93, 156–179, 195–219, 291–309, 346–369, 385–411, 433–455, and 531–549; these read VFSA…FHGA, LYCT…FHYH, LNHH…HVSL, TVHH…GHMY, WHAQ…HHMY, LSLF…IFMV, AIIS…LYIH, and FLVH…LILL. [4Fe-4S] cluster-binding residues include Cys-573 and Cys-582. 2 consecutive transmembrane segments (helical) span residues 589-610 and 664-686; these read HVFL…HFSW and LSAY…MFLF. His-675 is a binding site for chlorophyll a'. Residues Met-683 and Tyr-691 each coordinate chlorophyll a. Trp-692 is a binding site for phylloquinone. The chain crosses the membrane as a helical span at residues 724-744; sequence AVGVAHYLLGGIATTWAFFLA.

It belongs to the PsaA/PsaB family. The PsaA/B heterodimer binds the P700 chlorophyll special pair and subsequent electron acceptors. PSI consists of a core antenna complex that captures photons, and an electron transfer chain that converts photonic excitation into a charge separation. The eukaryotic PSI reaction center is composed of at least 11 subunits. It depends on P700 is a chlorophyll a/chlorophyll a' dimer, A0 is one or more chlorophyll a, A1 is one or both phylloquinones and FX is a shared 4Fe-4S iron-sulfur center. as a cofactor.

Its subcellular location is the plastid. It localises to the chloroplast thylakoid membrane. The catalysed reaction is reduced [plastocyanin] + hnu + oxidized [2Fe-2S]-[ferredoxin] = oxidized [plastocyanin] + reduced [2Fe-2S]-[ferredoxin]. Functionally, psaA and PsaB bind P700, the primary electron donor of photosystem I (PSI), as well as the electron acceptors A0, A1 and FX. PSI is a plastocyanin-ferredoxin oxidoreductase, converting photonic excitation into a charge separation, which transfers an electron from the donor P700 chlorophyll pair to the spectroscopically characterized acceptors A0, A1, FX, FA and FB in turn. Oxidized P700 is reduced on the lumenal side of the thylakoid membrane by plastocyanin. This Psilotum nudum (Whisk fern) protein is Photosystem I P700 chlorophyll a apoprotein A1.